Reading from the N-terminus, the 216-residue chain is Large ribosomal subunit protein uL1 (216 aa).

Belongs to the universal ribosomal protein uL1 family. As to quaternary structure, component of the large ribosomal subunit.

The protein resides in the cytoplasm. In terms of biological role, component of the large ribosomal subunit. The ribosome is a large ribonucleoprotein complex responsible for the synthesis of proteins in the cell. The chain is Large ribosomal subunit protein uL1 (rpl10a) from Danio rerio (Zebrafish).